Here is a 68-residue protein sequence, read N- to C-terminus: DNA-directed RNA polymerase subunit omega (68 aa).

The protein belongs to the RNA polymerase subunit omega family. The RNAP catalytic core consists of 2 alpha, 1 beta, 1 beta' and 1 omega subunit. When a sigma factor is associated with the core the holoenzyme is formed, which can initiate transcription.

The catalysed reaction is RNA(n) + a ribonucleoside 5'-triphosphate = RNA(n+1) + diphosphate. In terms of biological role, promotes RNA polymerase assembly. Latches the N- and C-terminal regions of the beta' subunit thereby facilitating its interaction with the beta and alpha subunits. The chain is DNA-directed RNA polymerase subunit omega from Desulfitobacterium hafniense (strain DSM 10664 / DCB-2).